The chain runs to 1099 residues: Exonuclease/helicase subunit RexB (1099 aa).

4 residues coordinate [4Fe-4S] cluster: C766, C1056, C1059, and C1065.

It belongs to the helicase family. AddB/RexB type 2 subfamily. Heterodimer of RexA (AddA) and RexB. Mg(2+) serves as cofactor. Requires [4Fe-4S] cluster as cofactor.

The heterodimer acts both as an ATP-dependent DNA helicase and an ATP-dependent, dual-direction single-stranded exonuclease. Recognizes the L.lactis chi site (5'-GCGCGTG-3'), which stimulates homologous recombination. This subunit has 5'-&gt;3' exonuclease activity. In terms of biological role, the heterodimer acts as both an ATP-dependent DNA helicase and an ATP-dependent, dual-direction single-stranded exonuclease. Recognizes the chi site generating a DNA molecule suitable for the initiation of homologous recombination. This subunit has 5' -&gt; 3' nuclease activity but not helicase activity. The sequence is that of Exonuclease/helicase subunit RexB from Lactococcus lactis subsp. cremoris (strain MG1363).